The following is a 403-amino-acid chain: Tyrosine--tRNA ligase (403 aa).

A 'HIGH' region motif is present at residues 42 to 51 (PTAPDLHLGH). Residues 226-230 (KMSKS) carry the 'KMSKS' region motif. Lysine 229 provides a ligand contact to ATP. The 62-residue stretch at 339-400 (LRLAGLLTAA…GKRNFARVLL (62 aa)) folds into the S4 RNA-binding domain.

It belongs to the class-I aminoacyl-tRNA synthetase family. TyrS type 2 subfamily. As to quaternary structure, homodimer.

It is found in the cytoplasm. It catalyses the reaction tRNA(Tyr) + L-tyrosine + ATP = L-tyrosyl-tRNA(Tyr) + AMP + diphosphate + H(+). Catalyzes the attachment of tyrosine to tRNA(Tyr) in a two-step reaction: tyrosine is first activated by ATP to form Tyr-AMP and then transferred to the acceptor end of tRNA(Tyr). This is Tyrosine--tRNA ligase from Xanthomonas euvesicatoria pv. vesicatoria (strain 85-10) (Xanthomonas campestris pv. vesicatoria).